The sequence spans 232 residues: Lipoprotein-releasing system ATP-binding protein LolD (232 aa).

Residues 6–231 (ISCENLNKVY…KLTIKESQHV (226 aa)) form the ABC transporter domain. Residue 42-49 (GSSGSGKS) coordinates ATP.

Belongs to the ABC transporter superfamily. Lipoprotein translocase (TC 3.A.1.125) family. The complex is composed of two ATP-binding proteins (LolD) and two transmembrane proteins (LolC and LolE).

It localises to the cell inner membrane. Its function is as follows. Part of the ABC transporter complex LolCDE involved in the translocation of mature outer membrane-directed lipoproteins, from the inner membrane to the periplasmic chaperone, LolA. Responsible for the formation of the LolA-lipoprotein complex in an ATP-dependent manner. In Pseudoalteromonas translucida (strain TAC 125), this protein is Lipoprotein-releasing system ATP-binding protein LolD.